We begin with the raw amino-acid sequence, 494 residues long: Sulfate adenylyltransferase subunit 1 (494 aa).

The tr-type G domain maps to 24-240 (TRPLRLITCG…LELATVRSAQ (217 aa)). The segment at 33-40 (GSVDDGKS) is G1. 33–40 (GSVDDGKS) contributes to the GTP binding site. The segment at 91–95 (GITID) is G2. The G3 stretch occupies residues 112–115 (DTPG). Residues 112–116 (DTPGH) and 167–170 (NKID) contribute to the GTP site. Residues 167–170 (NKID) form a G4 region. The tract at residues 204–206 (SAL) is G5.

It belongs to the TRAFAC class translation factor GTPase superfamily. Classic translation factor GTPase family. CysN/NodQ subfamily. In terms of assembly, heterodimer composed of CysD, the smaller subunit, and CysN.

It catalyses the reaction sulfate + ATP + H(+) = adenosine 5'-phosphosulfate + diphosphate. Its pathway is sulfur metabolism; hydrogen sulfide biosynthesis; sulfite from sulfate: step 1/3. With CysD forms the ATP sulfurylase (ATPS) that catalyzes the adenylation of sulfate producing adenosine 5'-phosphosulfate (APS) and diphosphate, the first enzymatic step in sulfur assimilation pathway. APS synthesis involves the formation of a high-energy phosphoric-sulfuric acid anhydride bond driven by GTP hydrolysis by CysN coupled to ATP hydrolysis by CysD. This Rhizobium tropici protein is Sulfate adenylyltransferase subunit 1.